The primary structure comprises 220 residues: Inner membrane-spanning protein YciB (220 aa).

Helical transmembrane passes span 20–40, 57–77, 86–106, 123–143, 156–176, and 187–207; these read EVPP…FFFA, IGAP…IALA, LPIM…LTLW, LFGG…GYVF, KLTL…EIVW, and FKVW…MPLI.

It belongs to the YciB family.

It localises to the cell inner membrane. Plays a role in cell envelope biogenesis, maintenance of cell envelope integrity and membrane homeostasis. In Brucella abortus (strain S19), this protein is Inner membrane-spanning protein YciB.